A 64-amino-acid chain; its full sequence is Large ribosomal subunit protein bL35 (64 aa).

The protein belongs to the bacterial ribosomal protein bL35 family.

The sequence is that of Large ribosomal subunit protein bL35 from Streptomyces coelicolor (strain ATCC BAA-471 / A3(2) / M145).